A 215-amino-acid polypeptide reads, in one-letter code: CASP-like protein UU3 (215 aa).

Topologically, residues 1-44 (MATAWESEYFDKVTPGERERAVPPMVPQQTPPPVYIQPQVSRNG) are cytoplasmic. Residues 45–65 (IVASIVLRLLTLIFAVVALAV) traverse the membrane as a helical segment. Topologically, residues 66–93 (LASNTGSFQVSTGSATSVKTIKFTILSA) are extracellular. A helical membrane pass occupies residues 94 to 114 (FTYLFAVCGVVAVYSLLLIIV). Topologically, residues 115-128 (EMIDLAVRGFTTHT) are cytoplasmic. The chain crosses the membrane as a helical span at residues 129-149 (LVAIFVFVLDQTMAYVLISAA). The Extracellular segment spans residues 150–185 (SASANGVKVSRDESNITGYKFDISCSNLGIDDYCTK). N-linked (GlcNAc...) asparagine glycosylation occurs at Asn164. A helical membrane pass occupies residues 186 to 206 (ASASVAIAFIAFLFMAITAGV). Over 207 to 215 (SARRLFKLP) the chain is Cytoplasmic.

Belongs to the Casparian strip membrane proteins (CASP) family. In terms of assembly, homodimer and heterodimers.

The protein localises to the cell membrane. The polypeptide is CASP-like protein UU3 (Physcomitrium patens (Spreading-leaved earth moss)).